Reading from the N-terminus, the 345-residue chain is Probable 3'(2'),5'-bisphosphate nucleotidase 4 (345 aa).

The Proton acceptor role is filled by D46. E71, D134, V136, and D137 together coordinate Mg(2+). Catalysis depends on T139, which acts as the Proton acceptor. Adenosine 3',5'-bisphosphate is bound by residues T139, S247, K250, and R264. Residues S247, K250, and R264 each contribute to the AMP site.

The protein belongs to the inositol monophosphatase superfamily. Requires Mg(2+) as cofactor.

The catalysed reaction is 3'-phosphoadenylyl sulfate + H2O = adenosine 5'-phosphosulfate + phosphate. It catalyses the reaction adenosine 3',5'-bisphosphate + H2O = AMP + phosphate. It carries out the reaction adenosine 2',5'-bisphosphate + H2O = AMP + phosphate. The enzyme catalyses 1D-myo-inositol 1,4-bisphosphate + H2O = 1D-myo-inositol 4-phosphate + phosphate. The catalysed reaction is 1D-myo-inositol 1,3,4-trisphosphate + H2O = 1D-myo-inositol 3,4-bisphosphate + phosphate. The protein operates within signal transduction; phosphatidylinositol signaling pathway. Its function is as follows. Phosphatase that converts adenosine 3'-phosphate 5'-phosphosulfate (PAPS) to adenosine 5'-phosphosulfate (APS) and 3'(2')-phosphoadenosine 5'-phosphate (PAP) to AMP. Is also able to hydrolyze inositol 1,4-bisphosphate and inositol 1,3,4-trisphosphate. The chain is Probable 3'(2'),5'-bisphosphate nucleotidase 4 (SAL4) from Arabidopsis thaliana (Mouse-ear cress).